The following is a 266-amino-acid chain: Protein-ADP-ribose hydrolase (266 aa).

The region spanning 74–265 (TDLKDLKPIK…LYKEAFNRDA (192 aa)) is the Macro domain. Positions 93, 94, and 107 each coordinate ADP-D-ribose. Zn(2+) is bound by residues cysteine 113, histidine 118, and cysteine 120. ADP-D-ribose-binding residues include cysteine 120, isoleucine 121, aspartate 122, serine 212, threonine 213, glycine 214, and phenylalanine 216.

Belongs to the MacroD-type family. Zn-Macro subfamily. Zn(2+) serves as cofactor.

The enzyme catalyses 4-O-(ADP-D-ribosyl)-L-aspartyl-[protein] + H2O = L-aspartyl-[protein] + ADP-D-ribose + H(+). ADP-ribosylhydrolase that specifically reverses the SirTM-mediated mono-ADP-ribosylation at an asparatate residue of GcvH-L, by releasing ADP-ribose from the target protein. May play a role in the regulation of the response to host-induced oxidative stress. The chain is Protein-ADP-ribose hydrolase from Staphylococcus aureus (strain MRSA252).